The sequence spans 196 residues: MSAAAPRLVVGLGNPGAEYTETRHNAGFRFCERLADKLGVRFSHESRFHGFVANARDAGVWLLMPQTYMNRSGQAVGALARFYRIAPAEILVVHDELDIPPGQLRLKFGGGLGGHNGLKDTSAHLATNDYWRLRIGIGHPGDRNEVVNYVLKPARREEQGQIDEALDRALAAWPMIARGEWNAATTRLNARPAALK.

Tyr19 contributes to the tRNA binding site. His24 (proton acceptor) is an active-site residue. Positions 68, 70, and 116 each coordinate tRNA.

This sequence belongs to the PTH family. Monomer.

It is found in the cytoplasm. The enzyme catalyses an N-acyl-L-alpha-aminoacyl-tRNA + H2O = an N-acyl-L-amino acid + a tRNA + H(+). Functionally, hydrolyzes ribosome-free peptidyl-tRNAs (with 1 or more amino acids incorporated), which drop off the ribosome during protein synthesis, or as a result of ribosome stalling. Its function is as follows. Catalyzes the release of premature peptidyl moieties from peptidyl-tRNA molecules trapped in stalled 50S ribosomal subunits, and thus maintains levels of free tRNAs and 50S ribosomes. This is Peptidyl-tRNA hydrolase from Aromatoleum aromaticum (strain DSM 19018 / LMG 30748 / EbN1) (Azoarcus sp. (strain EbN1)).